The chain runs to 207 residues: Ribosomal RNA small subunit methyltransferase G (207 aa).

S-adenosyl-L-methionine contacts are provided by residues G74, L79, 125–126, and R140; that span reads VE.

This sequence belongs to the methyltransferase superfamily. RNA methyltransferase RsmG family.

It localises to the cytoplasm. The catalysed reaction is guanosine(527) in 16S rRNA + S-adenosyl-L-methionine = N(7)-methylguanosine(527) in 16S rRNA + S-adenosyl-L-homocysteine. Specifically methylates the N7 position of guanine in position 527 of 16S rRNA. This is Ribosomal RNA small subunit methyltransferase G from Shewanella pealeana (strain ATCC 700345 / ANG-SQ1).